Here is a 197-residue protein sequence, read N- to C-terminus: Adenylate kinase (197 aa).

An ATP-binding site is contributed by 16 to 21 (GAGKGT). The tract at residues 36-65 (STGDILRDHVARGTALGQQAGPLMEAGQLV) is NMP. AMP-binding positions include Thr37, Arg42, 63–65 (QLV), 90–93 (GFPR), and Gln97. The LID stretch occupies residues 131 to 147 (DRGRQAVAEGRAPRADD). Position 132 (Arg132) interacts with ATP. The segment at 137–158 (VAEGRAPRADDNEETARKRQQV) is disordered. Residues 141–153 (RAPRADDNEETAR) show a composition bias toward basic and acidic residues. 2 residues coordinate AMP: Arg144 and Arg155. Gly183 lines the ATP pocket.

Belongs to the adenylate kinase family. As to quaternary structure, monomer.

Its subcellular location is the cytoplasm. The enzyme catalyses AMP + ATP = 2 ADP. The protein operates within purine metabolism; AMP biosynthesis via salvage pathway; AMP from ADP: step 1/1. Catalyzes the reversible transfer of the terminal phosphate group between ATP and AMP. Plays an important role in cellular energy homeostasis and in adenine nucleotide metabolism. In Deinococcus radiodurans (strain ATCC 13939 / DSM 20539 / JCM 16871 / CCUG 27074 / LMG 4051 / NBRC 15346 / NCIMB 9279 / VKM B-1422 / R1), this protein is Adenylate kinase.